A 470-amino-acid chain; its full sequence is Nuclear receptor ROR-beta (470 aa).

The nuclear receptor DNA-binding region spans 18 to 93; it reads VIPCKICGDK…LGMSRDAVKF (76 aa). 2 consecutive NR C4-type zinc fingers follow at residues 21–41 and 57–81; these read CKIC…CEGC and CPRQ…LQKC. A compositionally biased stretch (basic and acidic residues) spans 104 to 117; it reads LYAEVQKHQQRLQE. A disordered region spans residues 104–127; it reads LYAEVQKHQQRLQEQRQQQSGEAE. The region spanning 222–460 is the NR LBD domain; it reads EIDRIAQNII…TLFPPLYKEL (239 aa). Positions 456–461 match the AF-2 motif; sequence LYKELF.

This sequence belongs to the nuclear hormone receptor family. NR1 subfamily. In terms of assembly, monomer. Interacts with CRX.

It is found in the nucleus. It localises to the nucleoplasm. Nuclear receptor that binds DNA as a monomer to ROR response elements (RORE) containing a single core motif half-site 5'-AGGTCA-3' preceded by a short A-T-rich sequence. Considered to have intrinsic transcriptional activity, have some natural ligands such as all-trans retinoic acid (ATRA) and other retinoids which act as inverse agonists repressing the transcriptional activity. Required for normal postnatal development of rod and cone photoreceptor cells. Modulates rod photoreceptors differentiation at least by inducing the transcription factor NRL-mediated pathway. In cone photoreceptor cells, regulates transcription of OPN1SW. Involved in the regulation of the period length and stability of the circadian rhythm. May control cytoarchitectural patterning of neocortical neurons during development. May act in a dose-dependent manner to regulate barrel formation upon innervation of layer IV neurons by thalamocortical axons. May play a role in the suppression of osteoblastic differentiation through the inhibition of RUNX2 transcriptional activity. In terms of biological role, isoform 1 is critical for hindlimb motor control and for the differentiation of amacrine and horizontal cells in the retina. Regulates the expression of PTF1A synergistically with FOXN4. This is Nuclear receptor ROR-beta (RORB) from Homo sapiens (Human).